Consider the following 694-residue polypeptide: Prolyl 3-hydroxylase 2 (694 aa).

The N-terminal stretch at Met1–Gly23 is a signal peptide. TPR repeat units lie at residues Phe35–Leu68, Arg136–His169, His196–Glu229, and Pro292–Asp325. The stretch at Lys386–Thr418 forms a coiled coil. The segment at His395–Glu427 is disordered. Asn446 and Asn535 each carry an N-linked (GlcNAc...) asparagine glycan. The Fe2OG dioxygenase domain maps to Thr543–Leu657. Fe cation contacts are provided by His566, Asp568, and His638. Arg648 is an active-site residue. Positions Lys691 to Leu694 match the Prevents secretion from ER motif.

The protein belongs to the leprecan family. The cofactor is Fe cation. Requires L-ascorbate as cofactor.

It localises to the endoplasmic reticulum. The protein resides in the sarcoplasmic reticulum. Its subcellular location is the golgi apparatus. It catalyses the reaction L-prolyl-[collagen] + 2-oxoglutarate + O2 = trans-3-hydroxy-L-prolyl-[collagen] + succinate + CO2. Its function is as follows. Prolyl 3-hydroxylase that catalyzes the post-translational formation of 3-hydroxyproline on collagens. Contributes to proline 3-hydroxylation of collagen COL4A1 and COL1A1 in tendons, the eye sclera and in the eye lens capsule. Has high activity with the type IV collagen COL4A1, and lower activity with COL1A1. Catalyzes hydroxylation of the first Pro in Gly-Pro-Hyp sequences where Hyp is 4-hydroxyproline. Has no activity on substrates that lack 4-hydroxyproline in the third position. This is Prolyl 3-hydroxylase 2 from Gallus gallus (Chicken).